A 182-amino-acid chain; its full sequence is Fatty-acid and retinol-binding protein 1 (182 aa).

An N-terminal signal peptide occupies residues 1–17 (MIRATIILAAVAALAFS). Positions 86–106 (EKASKLHQIVKDKVNALNDEA) form a coiled coil.

The protein belongs to the fatty-acid and retinol-binding protein (FARBP) family.

It is found in the secreted. Functionally, probably binds lipids. This Caenorhabditis elegans protein is Fatty-acid and retinol-binding protein 1 (far-1).